A 239-amino-acid polypeptide reads, in one-letter code: Small ribosomal subunit protein uS2 (239 aa).

Belongs to the universal ribosomal protein uS2 family.

The sequence is that of Small ribosomal subunit protein uS2 from Lysinibacillus sphaericus (strain C3-41).